A 185-amino-acid polypeptide reads, in one-letter code: Probable NEDD8-conjugating enzyme Ubc12-like (185 aa).

Residues 8 to 29 form a disordered region; the sequence is KEKQREESQSNNGRGASTVKKQ. Residues 16-28 show a composition bias toward polar residues; sequence QSNNGRGASTVKK. The UBC core domain maps to 31–176; that stretch reads AGELRLHKDI…VRRAMMGGQV (146 aa). The active-site Glycyl thioester intermediate is the cysteine 114.

This sequence belongs to the ubiquitin-conjugating enzyme family. UBC12 subfamily.

The protein operates within protein modification; protein neddylation. Functionally, accepts the ubiquitin-like protein NEDD8/RUB1 from the ECR1-AXR1 E1 complex and catalyzes its covalent attachment to other proteins. The polypeptide is Probable NEDD8-conjugating enzyme Ubc12-like (RCE2) (Arabidopsis thaliana (Mouse-ear cress)).